The chain runs to 235 residues: Small ribosomal subunit protein uS2c (235 aa).

This sequence belongs to the universal ribosomal protein uS2 family.

The protein localises to the plastid. This Euglena longa (Euglenophycean alga) protein is Small ribosomal subunit protein uS2c (rps2).